The chain runs to 347 residues: FK506-binding protein-like (347 aa).

The interval 1-24 (METSPISPMNEKNTAQPQQREENA) is disordered. Position 3 is a phosphothreonine (T3). TPR repeat units follow at residues 208 to 241 (AKEEHRRGTELFRAGNPQGAARCYGRALRLLLTL), 250 to 283 (TTLYANLAACQLLLGHPQLAAQSCDRVLEREPGH), and 284 to 317 (LKALYRRGVARAALGDLEKATADFKKVLAVDPKN).

In terms of assembly, forms a ternary complex with CDKN1A/p21 and HSP90AB1/Hsp90.

Its function is as follows. May be involved in response to X-ray. Regulates p21 protein stability by binding to Hsp90 and p21. The protein is FK506-binding protein-like (Fkbpl) of Mus musculus (Mouse).